The sequence spans 67 residues: MARITVEDCLKQIPNRFELALAATYRARQLAQGHTPKIESRDKPTVVALREIAAGQVGVEMLKKVPV.

It belongs to the RNA polymerase subunit omega family. In terms of assembly, the RNAP catalytic core consists of 2 alpha, 1 beta, 1 beta' and 1 omega subunit. When a sigma factor is associated with the core the holoenzyme is formed, which can initiate transcription.

It catalyses the reaction RNA(n) + a ribonucleoside 5'-triphosphate = RNA(n+1) + diphosphate. In terms of biological role, promotes RNA polymerase assembly. Latches the N- and C-terminal regions of the beta' subunit thereby facilitating its interaction with the beta and alpha subunits. The protein is DNA-directed RNA polymerase subunit omega of Paraburkholderia phymatum (strain DSM 17167 / CIP 108236 / LMG 21445 / STM815) (Burkholderia phymatum).